The following is a 261-amino-acid chain: Phosphate import ATP-binding protein PstB (261 aa).

In terms of domain architecture, ABC transporter spans 15 to 256 (LQVRRLNFYY…PAHQETENYI (242 aa)). 47-54 (GPSGCGKS) contacts ATP.

Belongs to the ABC transporter superfamily. Phosphate importer (TC 3.A.1.7) family. The complex is composed of two ATP-binding proteins (PstB), two transmembrane proteins (PstC and PstA) and a solute-binding protein (PstS).

Its subcellular location is the cell inner membrane. It catalyses the reaction phosphate(out) + ATP + H2O = ADP + 2 phosphate(in) + H(+). Functionally, part of the ABC transporter complex PstSACB involved in phosphate import. Responsible for energy coupling to the transport system. The protein is Phosphate import ATP-binding protein PstB of Burkholderia sp.